A 150-amino-acid chain; its full sequence is Small ribosomal subunit protein uS7c (150 aa).

The protein belongs to the universal ribosomal protein uS7 family. In terms of assembly, part of the 30S ribosomal subunit.

The protein resides in the plastid. Its subcellular location is the chloroplast. In terms of biological role, one of the primary rRNA binding proteins, it binds directly to 16S rRNA where it nucleates assembly of the head domain of the 30S subunit. The sequence is that of Small ribosomal subunit protein uS7c (rps7) from Huperzia lucidula (Shining clubmoss).